A 56-amino-acid polypeptide reads, in one-letter code: Large ribosomal subunit protein bL32 (56 aa).

The disordered stretch occupies residues 1–21; that stretch reads MGVPQRRQSHARKNKRRSEWR. The segment covering 7–19 has biased composition (basic residues); sequence RQSHARKNKRRSE.

The protein belongs to the bacterial ribosomal protein bL32 family.

This chain is Large ribosomal subunit protein bL32, found in Syntrophomonas wolfei subsp. wolfei (strain DSM 2245B / Goettingen).